The following is a 248-amino-acid chain: uncharacterized protein (248 aa).

8–32 (IVTGAAQGIGQAYAQALAREGASVV) lines the NADP(+) pocket. Serine 143 provides a ligand contact to substrate. The active-site Proton acceptor is tyrosine 153.

This sequence belongs to the short-chain dehydrogenases/reductases (SDR) family.

This is an uncharacterized protein from Mycobacterium tuberculosis (strain CDC 1551 / Oshkosh).